Consider the following 977-residue polypeptide: Ubiquitin-like modifier-activating enzyme 7 (977 aa).

It belongs to the ubiquitin-activating E1 family. Ubiquitinated by RNF170.

The protein localises to the cytoplasm. Its subcellular location is the nucleus. It participates in protein modification; protein ubiquitination. Functionally, E1-activating enzyme that catalyzes the covalent conjugation of the ubiquitin-like protein product of ISG15 to additional interferons stimulated proteins (ISGs) as well as other cellular proteins such as P53 in a process termed protein ISGylation. Plays an essential role in antiviral immunity together with ISG15 by restricting the replication of many viruses including rabies virus, influenza virus, sindbis virus or rotavirus. The chain is Ubiquitin-like modifier-activating enzyme 7 from Mus musculus (Mouse).